A 445-amino-acid chain; its full sequence is Exodeoxyribonuclease 7 large subunit (445 aa).

It belongs to the XseA family. In terms of assembly, heterooligomer composed of large and small subunits.

It localises to the cytoplasm. The enzyme catalyses Exonucleolytic cleavage in either 5'- to 3'- or 3'- to 5'-direction to yield nucleoside 5'-phosphates.. Bidirectionally degrades single-stranded DNA into large acid-insoluble oligonucleotides, which are then degraded further into small acid-soluble oligonucleotides. The polypeptide is Exodeoxyribonuclease 7 large subunit (Staphylococcus aureus (strain USA300 / TCH1516)).